Reading from the N-terminus, the 478-residue chain is Ribulose bisphosphate carboxylase large chain (478 aa).

Positions 1–2 (MS) are excised as a propeptide. N123 and T173 together coordinate substrate. The active-site Proton acceptor is K175. K177 is a substrate binding site. Residues K201, D203, and E204 each coordinate Mg(2+). The residue at position 201 (K201) is an N6-carboxylysine. Phosphoserine is present on S208. The active-site Proton acceptor is the H294. Substrate-binding residues include R295 and H327. At T330 the chain carries Phosphothreonine. A substrate-binding site is contributed by S379.

It belongs to the RuBisCO large chain family. Type I subfamily. Heterohexadecamer of 8 large chains and 8 small chains; disulfide-linked. The disulfide link is formed within the large subunit homodimers. Requires Mg(2+) as cofactor. In terms of processing, the disulfide bond which can form in the large chain dimeric partners within the hexadecamer appears to be associated with oxidative stress and protein turnover.

The protein localises to the plastid. It is found in the chloroplast. It carries out the reaction 2 (2R)-3-phosphoglycerate + 2 H(+) = D-ribulose 1,5-bisphosphate + CO2 + H2O. It catalyses the reaction D-ribulose 1,5-bisphosphate + O2 = 2-phosphoglycolate + (2R)-3-phosphoglycerate + 2 H(+). RuBisCO catalyzes two reactions: the carboxylation of D-ribulose 1,5-bisphosphate, the primary event in carbon dioxide fixation, as well as the oxidative fragmentation of the pentose substrate in the photorespiration process. Both reactions occur simultaneously and in competition at the same active site. This Lepidium virginicum (Virginia pepperweed) protein is Ribulose bisphosphate carboxylase large chain.